The chain runs to 97 residues: AAPVEFTVEKGSDEKNLALSIKYNKEGDSMAEVELKEHGSNEWLALKKNGDGVWEIKSDKPLKGPFNFRFVSEKGMRNVFDDVVPADFKVGTTYKPE.

The Expansin-like CBD domain occupies 15-96; that stretch reads KNLALSIKYN…DFKVGTTYKP (82 aa).

The protein belongs to the expansin family. Expansin B subfamily.

It is found in the secreted. The chain is Pollen allergen Lol p 2-A from Lolium perenne (Perennial ryegrass).